Consider the following 107-residue polypeptide: Heme-degrading monooxygenase (107 aa).

One can recognise an ABM domain in the interval 2 to 94; that stretch reads IIVTNTAKIT…YILDNKITYY (93 aa). Asparagine 6 contacts Fe cation. A heme-binding site is contributed by histidine 76.

The protein belongs to the antibiotic biosynthesis monooxygenase family. Heme-degrading monooxygenase IsdG subfamily. As to quaternary structure, homodimer.

It localises to the cytoplasm. It catalyses the reaction heme b + 3 reduced [NADPH--hemoprotein reductase] + 3 O2 = biliverdin IXalpha + CO + Fe(2+) + 3 oxidized [NADPH--hemoprotein reductase] + 3 H2O + H(+). In terms of biological role, allows bacterial pathogens to use the host heme as an iron source. Catalyzes the oxidative degradation of the heme macrocyclic porphyrin ring to the biliverdin in the presence of a suitable electron donor such as ascorbate or NADPH--cytochrome P450 reductase, with subsequent release of free iron. This Bacillus thuringiensis subsp. konkukian (strain 97-27) protein is Heme-degrading monooxygenase.